We begin with the raw amino-acid sequence, 261 residues long: tRNA U34 carboxymethyltransferase (261 aa).

Residues Lys25, Trp39, Lys44, Gly63, 114–115 (VE), Tyr135, and Arg250 contribute to the carboxy-S-adenosyl-L-methionine site.

The protein belongs to the class I-like SAM-binding methyltransferase superfamily. CmoB family. In terms of assembly, homotetramer.

It catalyses the reaction carboxy-S-adenosyl-L-methionine + 5-hydroxyuridine(34) in tRNA = 5-carboxymethoxyuridine(34) in tRNA + S-adenosyl-L-homocysteine + H(+). Its function is as follows. Catalyzes carboxymethyl transfer from carboxy-S-adenosyl-L-methionine (Cx-SAM) to 5-hydroxyuridine (ho5U) to form 5-carboxymethoxyuridine (cmo5U) at position 34 in tRNAs. In Helicobacter pylori (strain G27), this protein is tRNA U34 carboxymethyltransferase.